The sequence spans 310 residues: HPr kinase/phosphorylase (310 aa).

Catalysis depends on residues H138 and K159. An ATP-binding site is contributed by 153–160 (GKSGVGKS). Position 160 (S160) interacts with Mg(2+). The active-site Proton acceptor; for phosphorylation activity. Proton donor; for dephosphorylation activity is D177. Residues 201–210 (LEIRGLGIIN) are important for the catalytic mechanism of both phosphorylation and dephosphorylation. Mg(2+) is bound at residue E202. R243 is an active-site residue. Positions 264-269 (PVRPGR) are important for the catalytic mechanism of dephosphorylation.

It belongs to the HPrK/P family. Homohexamer. The cofactor is Mg(2+).

The enzyme catalyses [HPr protein]-L-serine + ATP = [HPr protein]-O-phospho-L-serine + ADP + H(+). It carries out the reaction [HPr protein]-O-phospho-L-serine + phosphate + H(+) = [HPr protein]-L-serine + diphosphate. Its function is as follows. Catalyzes the ATP- as well as the pyrophosphate-dependent phosphorylation of a specific serine residue in HPr, a phosphocarrier protein of the phosphoenolpyruvate-dependent sugar phosphotransferase system (PTS). HprK/P also catalyzes the pyrophosphate-producing, inorganic phosphate-dependent dephosphorylation (phosphorolysis) of seryl-phosphorylated HPr (P-Ser-HPr). The two antagonistic activities of HprK/P are regulated by several intracellular metabolites, which change their concentration in response to the absence or presence of rapidly metabolisable carbon sources (glucose, fructose, etc.) in the growth medium. Also phosphorylates/dephosphorylates the HPr-like catabolite repression protein crh on a specific serine residue. Therefore, by controlling the phosphorylation state of HPr and crh, HPrK/P is a sensor enzyme that plays a major role in the regulation of carbon metabolism and sugar transport: it mediates carbon catabolite repression (CCR), and regulates PTS-catalyzed carbohydrate uptake and inducer exclusion. The sequence is that of HPr kinase/phosphorylase from Bacillus licheniformis (strain ATCC 14580 / DSM 13 / JCM 2505 / CCUG 7422 / NBRC 12200 / NCIMB 9375 / NCTC 10341 / NRRL NRS-1264 / Gibson 46).